We begin with the raw amino-acid sequence, 467 residues long: Putative alpha-amylase (467 aa).

Catalysis depends on Glu-145, which acts as the Nucleophile.

This sequence belongs to the glycosyl hydrolase 57 family.

The enzyme catalyses Endohydrolysis of (1-&gt;4)-alpha-D-glucosidic linkages in polysaccharides containing three or more (1-&gt;4)-alpha-linked D-glucose units.. In Methanocaldococcus jannaschii (strain ATCC 43067 / DSM 2661 / JAL-1 / JCM 10045 / NBRC 100440) (Methanococcus jannaschii), this protein is Putative alpha-amylase.